A 395-amino-acid chain; its full sequence is Elongation factor Tu (395 aa).

A tr-type G domain is found at 6–205 (KPHINVGTIG…NALEKIDLPI (200 aa)). Residues 15–22 (GHVDHGKT) form a G1 region. 15-22 (GHVDHGKT) serves as a coordination point for GTP. Thr22 provides a ligand contact to Mg(2+). A G2 region spans residues 59–63 (GITIS). Residues 80–83 (DCPG) are G3. GTP is bound by residues 80-84 (DCPGH) and 135-138 (NKCD). Residues 135–138 (NKCD) are G4. Residues 173 to 175 (SAV) form a G5 region.

The protein belongs to the TRAFAC class translation factor GTPase superfamily. Classic translation factor GTPase family. EF-Tu/EF-1A subfamily. As to quaternary structure, monomer.

It localises to the cytoplasm. It carries out the reaction GTP + H2O = GDP + phosphate + H(+). Functionally, GTP hydrolase that promotes the GTP-dependent binding of aminoacyl-tRNA to the A-site of ribosomes during protein biosynthesis. The chain is Elongation factor Tu from Ehrlichia ruminantium (strain Gardel).